A 138-amino-acid polypeptide reads, in one-letter code: Transcription antitermination protein NusB (138 aa).

It belongs to the NusB family.

In terms of biological role, involved in transcription antitermination. Required for transcription of ribosomal RNA (rRNA) genes. Binds specifically to the boxA antiterminator sequence of the ribosomal RNA (rrn) operons. This chain is Transcription antitermination protein NusB, found in Tolumonas auensis (strain DSM 9187 / NBRC 110442 / TA 4).